A 339-amino-acid chain; its full sequence is Holliday junction branch migration complex subunit RuvB (339 aa).

Residues 1-180 (MTRTITPDMT…FGVISRLEFY (180 aa)) are large ATPase domain (RuvB-L). ATP is bound by residues L19, R20, G61, K64, T65, T66, 127 to 129 (EDF), R170, Y180, and R217. A Mg(2+)-binding site is contributed by T65. Positions 181–251 (TIEELAFIIT…VVQDALALLE (71 aa)) are small ATPAse domain (RuvB-S). A head domain (RuvB-H) region spans residues 254 to 339 (HMGFDYMDRM…EPPQGKLFQD (86 aa)). R309 and R314 together coordinate DNA.

It belongs to the RuvB family. As to quaternary structure, homohexamer. Forms an RuvA(8)-RuvB(12)-Holliday junction (HJ) complex. HJ DNA is sandwiched between 2 RuvA tetramers; dsDNA enters through RuvA and exits via RuvB. An RuvB hexamer assembles on each DNA strand where it exits the tetramer. Each RuvB hexamer is contacted by two RuvA subunits (via domain III) on 2 adjacent RuvB subunits; this complex drives branch migration. In the full resolvosome a probable DNA-RuvA(4)-RuvB(12)-RuvC(2) complex forms which resolves the HJ.

It is found in the cytoplasm. It catalyses the reaction ATP + H2O = ADP + phosphate + H(+). Its function is as follows. The RuvA-RuvB-RuvC complex processes Holliday junction (HJ) DNA during genetic recombination and DNA repair, while the RuvA-RuvB complex plays an important role in the rescue of blocked DNA replication forks via replication fork reversal (RFR). RuvA specifically binds to HJ cruciform DNA, conferring on it an open structure. The RuvB hexamer acts as an ATP-dependent pump, pulling dsDNA into and through the RuvAB complex. RuvB forms 2 homohexamers on either side of HJ DNA bound by 1 or 2 RuvA tetramers; 4 subunits per hexamer contact DNA at a time. Coordinated motions by a converter formed by DNA-disengaged RuvB subunits stimulates ATP hydrolysis and nucleotide exchange. Immobilization of the converter enables RuvB to convert the ATP-contained energy into a lever motion, pulling 2 nucleotides of DNA out of the RuvA tetramer per ATP hydrolyzed, thus driving DNA branch migration. The RuvB motors rotate together with the DNA substrate, which together with the progressing nucleotide cycle form the mechanistic basis for DNA recombination by continuous HJ branch migration. Branch migration allows RuvC to scan DNA until it finds its consensus sequence, where it cleaves and resolves cruciform DNA. In Geotalea daltonii (strain DSM 22248 / JCM 15807 / FRC-32) (Geobacter daltonii), this protein is Holliday junction branch migration complex subunit RuvB.